The sequence spans 264 residues: MKQYLDLMRHVLDHGDRKSDRTGTGTLSIFGWQMRFNLDDGFPLLTTKKLHTRSIIHELLWFLRGDTNIRYLNENGVSIWDDWADENGDLGPVYGKQWRRWETANGATIDQIAQLIDGLKHNPDSRRHLVSAWNPGEVAGMALPPCHALFQFYVAGDRLSCQLYQRSADIFLGVPFNIASYALLTLMVAQVCGLRAGDFVWTGGDCHLYLNHLDQARLQLSRQPRALPRMIVNPGVTDIFGFRFEDFRLEGYDPHPHIKAEVAV.

A dUMP-binding site is contributed by Arg-21. Position 51 (His-51) interacts with (6R)-5,10-methylene-5,6,7,8-tetrahydrofolate. 126–127 (RR) contacts dUMP. Cys-146 (nucleophile) is an active-site residue. DUMP is bound by residues 166-169 (RSAD), Asn-177, and 207-209 (HLY). Residue Asp-169 coordinates (6R)-5,10-methylene-5,6,7,8-tetrahydrofolate. Ala-263 lines the (6R)-5,10-methylene-5,6,7,8-tetrahydrofolate pocket.

This sequence belongs to the thymidylate synthase family. Bacterial-type ThyA subfamily. As to quaternary structure, homodimer.

It is found in the cytoplasm. The catalysed reaction is dUMP + (6R)-5,10-methylene-5,6,7,8-tetrahydrofolate = 7,8-dihydrofolate + dTMP. The protein operates within pyrimidine metabolism; dTTP biosynthesis. Functionally, catalyzes the reductive methylation of 2'-deoxyuridine-5'-monophosphate (dUMP) to 2'-deoxythymidine-5'-monophosphate (dTMP) while utilizing 5,10-methylenetetrahydrofolate (mTHF) as the methyl donor and reductant in the reaction, yielding dihydrofolate (DHF) as a by-product. This enzymatic reaction provides an intracellular de novo source of dTMP, an essential precursor for DNA biosynthesis. The sequence is that of Thymidylate synthase from Aromatoleum aromaticum (strain DSM 19018 / LMG 30748 / EbN1) (Azoarcus sp. (strain EbN1)).